The sequence spans 1249 residues: MGHSRRPAGGEKKSRFGRSKAAADVGDGRQAGGKPQVRKAVFESTKKKEIGVSDLTLLSKISNEAINDNLKLRFQHDEIYTYIGHVLVSVNPFRDLGIYTDSVLNSYRGKNRLEVPPHVFAVAESAYYNMKSYKDNQCVIISGESGAGKTEAAKRIMQYIASVSGGSDSSIQQTKDMVLATNPLLESFGNAKTLRNNNSSRFGKYLELEFNAQGEPVGANITNYLLEKSRVVGQITNERNFHIFYQFAKGAPQKYRDSFGVQQPQSYLYTSRSKCFDVPGVDDVAEFQDTLNAMSVIGMSEAEQDNVFRMLAAILWMGNIQFAEDDSGNAAITDQSVVDFVAYLLEVDAGQVNQALTIRMMETSRGGRRGSVYEVPLNTTQALAVRDALAKAIYFNLFDWIVGRVNQSLTAKGAVANSIGILDIYGFEIFEKNSFEQLCINYVNEKLQQIFIQLTLKAEQDEYEREQITWTPIKYFDNKVVCSLIEDKRPPGVFAALNDACATAHADSGAADNTFVGRLNFLGQNPNFENRQGQFIIKHYAGDVSYAVQGMTDKNKDQLLKDLLNLVQSSSNHFVHTLFPEQVNQDDKRRPPTASDKIKASANDLVATLMKAQPSYIRTIKPNDNKAPKEFNESNVLHQIKYLGLQENVRIRRAGFAYRQTFDKFVERFYLLSPKTSYAGDYTWTGDVETGARQILKDTRIPAEEYQMGITKVFIKTPETLFALEAMRDRYWHNMAIRIQRAWRNYLRYRTECAIRIQRFWRRMNGGLELLKLRDQGHTILGGRKERRRMSILGSRRFLGDYVGISNKGGPGEMIRSGAAISTSDDVLFSCRGEVLVSKFGRSSKPSPRIFVLTNRHVYIVSQNFVNNQLVISSERTIPIGAIKTVSASSYRDDWFSLVVGGQEPDPLCNCVFKTEFFTHLHNALRGQLNLKIGPEIEYNKKPGKLATVKVVKDGSQVDSYKSGTIHTGPGEPPNSVSKPTPRGKQVAARPVTKGKLLRPGGPGGGPSKLASRPVPERRPIPQPTPQTAAAQPTPASRPVPQPVAAVAASHSRTSSTASARAPPPPPPAPPAAAGPKKAKALYDFSSDNNGMLSISAGQIVEIVSKEGNGWWLCMNLETSAQGWTPEAYLEEQVAPTPKPAPPPPPPVAPRASPAPVNGSAAVAAAKAKAAPPPPAKRPNMAGRKTAPAPPPAPRDSAVSMNSQGDSSGASGRGTPSSVSNASLAGGLAEALRARQSAMQGKQDDDDDW.

A disordered region spans residues 1 to 40; it reads MGHSRRPAGGEKKSRFGRSKAAADVGDGRQAGGKPQVRKA. The Myosin motor domain occupies 50–729; the sequence is IGVSDLTLLS…TLFALEAMRD (680 aa). Residue 143–150 coordinates ATP; the sequence is GESGAGKT. S371 is modified (phosphoserine). The segment at 418-500 is actin-binding; sequence SIGILDIYGF…PGVFAALNDA (83 aa). IQ domains follow at residues 733-753 and 754-779; these read HNMA…RTEC and AIRI…QGHT. Positions 787–979 constitute a TH1 domain; sequence RRRMSILGSR…PGEPPNSVSK (193 aa). 2 disordered regions span residues 959-1081 and 1127-1249; these read DSYK…KAKA and EAYL…DDDW. Composition is skewed to low complexity over residues 1026–1035 and 1043–1061; these read PQTAAAQPTP and PVAA…ASAR. Residues 1062 to 1073 show a composition bias toward pro residues; sequence APPPPPPAPPAA. The SH3 domain maps to 1074-1135; the sequence is AGPKKAKALY…PEAYLEEQVA (62 aa). Pro residues predominate over residues 1137–1149; that stretch reads TPKPAPPPPPPVA. The span at 1150-1170 shows a compositional bias: low complexity; sequence PRASPAPVNGSAAVAAAKAKA. Positions 1199–1221 are enriched in polar residues; sequence VSMNSQGDSSGASGRGTPSSVSN. Residues 1222–1235 are compositionally biased toward low complexity; it reads ASLAGGLAEALRAR.

It belongs to the TRAFAC class myosin-kinesin ATPase superfamily. Myosin family. As to quaternary structure, interacts (via IQ domains) with camA. In terms of processing, phosphorylation of the TEDS site (Ser-371) is required for the polarization of the actin cytoskeleton. Phosphorylation probably activates the myosin-I ATPase activity.

The protein resides in the cytoplasm. It is found in the cytoskeleton. The protein localises to the actin patch. Functionally, type-I myosin implicated in the organization of the actin cytoskeleton. Required for proper actin cytoskeleton polarization. At the cell cortex, assembles in patch-like structures together with proteins from the actin-polymerizing machinery and promotes actin assembly. Functions as actin nucleation-promoting factor (NPF) for the Arp2/3 complex. Plays an important role in polarized growth, spore germination, hyphal morphogenesis, and septal wall formation. The chain is Myosin-1 (myoA) from Emericella nidulans (strain FGSC A4 / ATCC 38163 / CBS 112.46 / NRRL 194 / M139) (Aspergillus nidulans).